Here is a 246-residue protein sequence, read N- to C-terminus: tRNA (guanine-N(1)-)-methyltransferase (246 aa).

Residues Gly114 and 134–139 (IGDYIL) contribute to the S-adenosyl-L-methionine site.

Belongs to the RNA methyltransferase TrmD family. In terms of assembly, homodimer.

It localises to the cytoplasm. The catalysed reaction is guanosine(37) in tRNA + S-adenosyl-L-methionine = N(1)-methylguanosine(37) in tRNA + S-adenosyl-L-homocysteine + H(+). Functionally, specifically methylates guanosine-37 in various tRNAs. The protein is tRNA (guanine-N(1)-)-methyltransferase of Coxiella burnetii (strain RSA 493 / Nine Mile phase I).